The following is a 642-amino-acid chain: Acid beta-fructofuranosidase (642 aa).

The Cytoplasmic segment spans residues 1-22; sequence MRNDSPYTPLLNASHNNHRRRE. A propeptide spans 1–95 (removed in mature form); sequence MRNDSPYTPL…LSGNLVGEGG (95 aa). A helical; Signal-anchor for type II membrane protein transmembrane segment spans residues 23–43; that stretch reads LLLLFSGLLLLASIIAFSAYI. Over 44–642 the chain is Lumenal; sequence AQPHADADVS…YHPDQKRQTS (599 aa). N-linked (GlcNAc...) asparagine glycosylation occurs at N100. Substrate-binding positions include 119–122, Q138, W146, 181–182, and 245–246; these read WMND, WT, and RD. The active site involves D122. N267 carries an N-linked (GlcNAc...) asparagine glycan. 2 residues coordinate substrate: E300 and D333. C490 and C538 are joined by a disulfide. N-linked (GlcNAc...) asparagine glycosylation is found at N491 and N615.

The protein belongs to the glycosyl hydrolase 32 family. As to quaternary structure, may be present in two forms, a 70 kDa monomer and a heterodimer of the 30 kDa and 38 kDa subunits. The ratio of the levels of the two forms within cells appears to be regulated developmentally.

It is found in the membrane. It localises to the vacuole. The protein localises to the vacuole lumen. It carries out the reaction Hydrolysis of terminal non-reducing beta-D-fructofuranoside residues in beta-D-fructofuranosides.. The protein operates within glycan biosynthesis; sucrose metabolism. In Vicia faba (Broad bean), this protein is Acid beta-fructofuranosidase (VCINV).